The sequence spans 156 residues: Transcriptional repressor NrdR (156 aa).

The segment at 3–34 (CPFCHSDNDKVQDSRTAEAGYVVRRKRLCQTC) is a zinc-finger region. In terms of domain architecture, ATP-cone spans 49-139 (VRVVKSDETR…VYRDFDDAKD (91 aa)).

The protein belongs to the NrdR family. It depends on Zn(2+) as a cofactor.

Negatively regulates transcription of bacterial ribonucleotide reductase nrd genes and operons by binding to NrdR-boxes. This is Transcriptional repressor NrdR from Rhodopirellula baltica (strain DSM 10527 / NCIMB 13988 / SH1).